A 247-amino-acid chain; its full sequence is ATP synthase subunit a, chloroplastic (247 aa).

A run of 5 helical transmembrane segments spans residues 28–48 (GQVL…CLLG), 95–115 (VPFL…GALI), 134–154 (INTT…AGIS), 199–219 (LVVG…IMLL), and 220–240 (GLFT…AYIG).

Belongs to the ATPase A chain family. As to quaternary structure, F-type ATPases have 2 components, CF(1) - the catalytic core - and CF(0) - the membrane proton channel. CF(1) has five subunits: alpha(3), beta(3), gamma(1), delta(1), epsilon(1). CF(0) has four main subunits: a, b, b' and c.

It is found in the plastid. It localises to the chloroplast thylakoid membrane. Its function is as follows. Key component of the proton channel; it plays a direct role in the translocation of protons across the membrane. The chain is ATP synthase subunit a, chloroplastic from Chlorella vulgaris (Green alga).